A 404-amino-acid polypeptide reads, in one-letter code: Phosphopentomutase (404 aa).

Mn(2+)-binding residues include Asp10, Asp303, His308, Asp344, His345, and His356.

Belongs to the phosphopentomutase family. Mn(2+) is required as a cofactor.

It localises to the cytoplasm. The enzyme catalyses 2-deoxy-alpha-D-ribose 1-phosphate = 2-deoxy-D-ribose 5-phosphate. It carries out the reaction alpha-D-ribose 1-phosphate = D-ribose 5-phosphate. It functions in the pathway carbohydrate degradation; 2-deoxy-D-ribose 1-phosphate degradation; D-glyceraldehyde 3-phosphate and acetaldehyde from 2-deoxy-alpha-D-ribose 1-phosphate: step 1/2. Isomerase that catalyzes the conversion of deoxy-ribose 1-phosphate (dRib-1-P) and ribose 1-phosphate (Rib-1-P) to deoxy-ribose 5-phosphate (dRib-5-P) and ribose 5-phosphate (Rib-5-P), respectively. The protein is Phosphopentomutase of Shewanella baltica (strain OS223).